A 343-amino-acid polypeptide reads, in one-letter code: Multidrug resistance protein MdtN (343 aa).

At 1–12 (MESTPKKAPRSK) the chain is on the cytoplasmic side. Residues 13 to 33 (FPALLVVALALVALVFVIWRV) traverse the membrane as a helical; Signal-anchor for type II membrane protein segment. The Periplasmic portion of the chain corresponds to 34–343 (DSAPSTNDAY…ASAVANLEPQ (310 aa)).

It belongs to the membrane fusion protein (MFP) (TC 8.A.1) family. As to quaternary structure, could be part of a tripartite efflux system composed of MdtN, MdtO and MdtP.

It is found in the cell inner membrane. Its function is as follows. Could be involved in resistance to puromycin, acriflavine and tetraphenylarsonium chloride. This Escherichia coli (strain K12) protein is Multidrug resistance protein MdtN (mdtN).